The primary structure comprises 528 residues: Bifunctional pantoate ligase/cytidylate kinase (528 aa).

The segment at 1–293 (MRLFTTIAGL…IGSCRLIDNI (293 aa)) is pantoate--beta-alanine ligase. 34–41 (MGALHKGH) serves as a coordination point for ATP. H41 functions as the Proton donor in the catalytic mechanism. A (R)-pantoate-binding site is contributed by Q65. Q65 contacts beta-alanine. ATP is bound at residue 160 to 163 (GQKD). Q166 contributes to the (R)-pantoate binding site. ATP is bound by residues I189 and 197-200 (ISSR). The interval 294 to 528 (LLRNRKPIIA…YGKSSVNNII (235 aa)) is cytidylate kinase.

In the N-terminal section; belongs to the pantothenate synthetase family. This sequence in the C-terminal section; belongs to the cytidylate kinase family. Type 1 subfamily.

Its subcellular location is the cytoplasm. The enzyme catalyses (R)-pantoate + beta-alanine + ATP = (R)-pantothenate + AMP + diphosphate + H(+). It catalyses the reaction CMP + ATP = CDP + ADP. It carries out the reaction dCMP + ATP = dCDP + ADP. It participates in cofactor biosynthesis; (R)-pantothenate biosynthesis; (R)-pantothenate from (R)-pantoate and beta-alanine: step 1/1. Functionally, catalyzes the condensation of pantoate with beta-alanine in an ATP-dependent reaction via a pantoyl-adenylate intermediate. Its function is as follows. Catalyzes the transfer of a phosphate group from ATP to either CMP or dCMP to form CDP or dCDP and ADP, respectively. The sequence is that of Bifunctional pantoate ligase/cytidylate kinase from Trichodesmium erythraeum (strain IMS101).